The primary structure comprises 102 residues: 10 kDa heat shock protein, mitochondrial (102 aa).

This sequence belongs to the GroES chaperonin family. Homohexamer.

The protein resides in the mitochondrion matrix. Eukaryotic CPN10 homolog which is essential for mitochondrial protein biogenesis, together with CPN60. Binds to CPN60 in the presence of Mg-ATP and suppresses the ATPase activity of the latter. The sequence is that of 10 kDa heat shock protein, mitochondrial from Schistosoma japonicum (Blood fluke).